The sequence spans 468 residues: Peroxisome proliferator-activated receptor alpha (468 aa).

The segment at 1–20 (MVDTESQICPLSPFGDDDLE) is disordered. Residues 99–173 (NIECRICGDK…DGMSHNAIRF (75 aa)) constitute a DNA-binding region (nuclear receptor). 2 consecutive NR C4-type zinc fingers follow at residues 102 to 122 (CRIC…CEGC) and 139 to 161 (CDRS…FQKC). The 228-residue stretch at 239-466 (FVIHDMETLC…HPLLQEIYRD (228 aa)) folds into the NR LBD domain. The required for heterodimerization with RXRA stretch occupies residues 304-433 (DQVTLLKYGV…PKLLQKMADL (130 aa)).

This sequence belongs to the nuclear hormone receptor family. NR1 subfamily. Heterodimer; with RXRA. This heterodimerization is required for DNA binding and transactivation activity. Interacts with NCOA3 coactivator. Interacts with CITED2; the interaction stimulates its transcriptional activity. Also interacts with PPARBP in vitro. Interacts with AKAP13, LPIN1, PRDM16 and coactivator NCOA6. Interacts with ASXL1 and ASXL2. Interacts with PER2. Interacts with SIRT1; the interaction seems to be modulated by NAD(+) levels. Interacts with CRY1 and CRY2. In hepatocytes, interacts with PAQR3 and HUWE1; the interactions promote PPARA poylubiquitination and HUWE1-mediated degradation. In terms of processing, ubiquitinated by E3 ubiquitin-protein ligase HUWE1; leading to proteasomal degradation. Phosphorylated.

The protein resides in the nucleus. In terms of biological role, ligand-activated transcription factor. Key regulator of lipid metabolism. Activated by the endogenous ligand 1-palmitoyl-2-oleoyl-sn-glycerol-3-phosphocholine (16:0/18:1-GPC). Activated by oleylethanolamide, a naturally occurring lipid that regulates satiety. Receptor for peroxisome proliferators such as hypolipidemic drugs and fatty acids. Regulates the peroxisomal beta-oxidation pathway of fatty acids. Functions as a transcription activator for the ACOX1 and P450 genes. Transactivation activity requires heterodimerization with RXRA and is antagonized by NR2C2. May be required for the propagation of clock information to metabolic pathways regulated by PER2. In Phascolarctos cinereus (Koala), this protein is Peroxisome proliferator-activated receptor alpha (PPARA).